We begin with the raw amino-acid sequence, 175 residues long: Mitochondrial inner membrane protease subunit 2 (175 aa).

A helical membrane pass occupies residues 19–37; that stretch reads FFVAVPVAVTFLDRVACVA. Active-site residues include Ser-43 and Lys-91.

Belongs to the peptidase S26 family. IMP2 subfamily. Heterodimer of 2 subunits, IMMPL1 and IMMPL2.

It localises to the mitochondrion inner membrane. Functionally, catalyzes the removal of transit peptides required for the targeting of proteins from the mitochondrial matrix, across the inner membrane, into the inter-membrane space. Known to process the nuclear encoded protein DIABLO. The sequence is that of Mitochondrial inner membrane protease subunit 2 (Immp2l) from Mus musculus (Mouse).